An 80-amino-acid chain; its full sequence is Cell division topological specificity factor (80 aa).

This sequence belongs to the MinE family.

Prevents the cell division inhibition by proteins MinC and MinD at internal division sites while permitting inhibition at polar sites. This ensures cell division at the proper site by restricting the formation of a division septum at the midpoint of the long axis of the cell. In Wolinella succinogenes (strain ATCC 29543 / DSM 1740 / CCUG 13145 / JCM 31913 / LMG 7466 / NCTC 11488 / FDC 602W) (Vibrio succinogenes), this protein is Cell division topological specificity factor.